The primary structure comprises 711 residues: Putative DNA topoisomerase 3 (711 aa).

Residues 2-135 (KYLILAEKPS…LRRLWISSVT (134 aa)) form the Toprim domain. Residues glutamate 8 and aspartate 104 each contribute to the Mg(2+) site. In terms of domain architecture, Topo IA-type catalytic spans 152–580 (YNDLYYAALA…EMKGFTKDVV (429 aa)). The segment at 186-191 (SLGRVQ) is interaction with DNA. Catalysis depends on tyrosine 305, which acts as the O-(5'-phospho-DNA)-tyrosine intermediate. Residues 691-711 (MNKNEGLDNNPFKDALKNLNL) are disordered.

Belongs to the type IA topoisomerase family. Mg(2+) serves as cofactor.

It catalyses the reaction ATP-independent breakage of single-stranded DNA, followed by passage and rejoining.. Its function is as follows. Releases the supercoiling and torsional tension of DNA, which is introduced during the DNA replication and transcription, by transiently cleaving and rejoining one strand of the DNA duplex. Introduces a single-strand break via transesterification at a target site in duplex DNA. The scissile phosphodiester is attacked by the catalytic tyrosine of the enzyme, resulting in the formation of a DNA-(5'-phosphotyrosyl)-enzyme intermediate and the expulsion of a 3'-OH DNA strand. The free DNA strand then undergoes passage around the unbroken strand, thus removing DNA supercoils. Finally, in the religation step, the DNA 3'-OH attacks the covalent intermediate to expel the active-site tyrosine and restore the DNA phosphodiester backbone. This chain is Putative DNA topoisomerase 3, found in Staphylococcus aureus (strain bovine RF122 / ET3-1).